The sequence spans 181 residues: Endoribonuclease YbeY (181 aa).

Residues His-115, His-119, and His-125 each coordinate Zn(2+).

The protein belongs to the endoribonuclease YbeY family. Zn(2+) is required as a cofactor.

Its subcellular location is the cytoplasm. Single strand-specific metallo-endoribonuclease involved in late-stage 70S ribosome quality control and in maturation of the 3' terminus of the 16S rRNA. The chain is Endoribonuclease YbeY from Bifidobacterium adolescentis (strain ATCC 15703 / DSM 20083 / NCTC 11814 / E194a).